The following is a 283-amino-acid chain: Thymidylate synthase (283 aa).

DUMP is bound at residue Arg-22. The active-site Nucleophile is Cys-160. Residues Arg-180 to Asp-183, Asn-191, and His-221 to Tyr-223 contribute to the dUMP site. Asp-183 is a binding site for (6R)-5,10-methylene-5,6,7,8-tetrahydrofolate. Ser-282 contacts (6R)-5,10-methylene-5,6,7,8-tetrahydrofolate.

Belongs to the thymidylate synthase family. Bacterial-type ThyA subfamily. In terms of assembly, homodimer.

Its subcellular location is the cytoplasm. It catalyses the reaction dUMP + (6R)-5,10-methylene-5,6,7,8-tetrahydrofolate = 7,8-dihydrofolate + dTMP. It participates in pyrimidine metabolism; dTTP biosynthesis. Catalyzes the reductive methylation of 2'-deoxyuridine-5'-monophosphate (dUMP) to 2'-deoxythymidine-5'-monophosphate (dTMP) while utilizing 5,10-methylenetetrahydrofolate (mTHF) as the methyl donor and reductant in the reaction, yielding dihydrofolate (DHF) as a by-product. This enzymatic reaction provides an intracellular de novo source of dTMP, an essential precursor for DNA biosynthesis. The chain is Thymidylate synthase from Shewanella loihica (strain ATCC BAA-1088 / PV-4).